We begin with the raw amino-acid sequence, 70 residues long: uncharacterized protein (70 aa).

This is an uncharacterized protein from Vaccinia virus (strain Copenhagen) (VACV).